The following is a 247-amino-acid chain: DNA polymerase sliding clamp (247 aa).

It belongs to the PCNA family. As to quaternary structure, homotrimer. The subunits circularize to form a toroid; DNA passes through its center. Replication factor C (RFC) is required to load the toroid on the DNA.

In terms of biological role, sliding clamp subunit that acts as a moving platform for DNA processing. Responsible for tethering the catalytic subunit of DNA polymerase and other proteins to DNA during high-speed replication. The polypeptide is DNA polymerase sliding clamp (Halobacterium salinarum (strain ATCC 29341 / DSM 671 / R1)).